Here is a 380-residue protein sequence, read N- to C-terminus: Histidinol-phosphate aminotransferase 1 (380 aa).

An N6-(pyridoxal phosphate)lysine modification is found at K235.

It belongs to the class-II pyridoxal-phosphate-dependent aminotransferase family. Histidinol-phosphate aminotransferase subfamily. Homodimer. Pyridoxal 5'-phosphate serves as cofactor.

It carries out the reaction L-histidinol phosphate + 2-oxoglutarate = 3-(imidazol-4-yl)-2-oxopropyl phosphate + L-glutamate. It functions in the pathway amino-acid biosynthesis; L-histidine biosynthesis; L-histidine from 5-phospho-alpha-D-ribose 1-diphosphate: step 7/9. This chain is Histidinol-phosphate aminotransferase 1, found in Psychrobacter arcticus (strain DSM 17307 / VKM B-2377 / 273-4).